A 152-amino-acid polypeptide reads, in one-letter code: Regulatory protein RecX (152 aa).

This sequence belongs to the RecX family.

It is found in the cytoplasm. Functionally, modulates RecA activity. This chain is Regulatory protein RecX, found in Haemophilus influenzae (strain 86-028NP).